The sequence spans 103 residues: Matrix Gla protein (103 aa).

Residues Met-1 to Cys-19 form the signal peptide. 4-carboxyglutamate is present on Glu-21. Phosphoserine occurs at positions 22, 25, and 28. In terms of domain architecture, Gla spans Arg-51 to Arg-97. 4-carboxyglutamate occurs at positions 56, 60, 67, and 71. A disulfide bridge connects residues Cys-73 and Cys-79. Residues Arg-97–Lys-103 constitute a propeptide, removed in mature form; probably by carboxypeptidase N.

It belongs to the osteocalcin/matrix Gla protein family. In terms of processing, requires vitamin K-dependent gamma-carboxylation for its function.

The protein resides in the secreted. In terms of biological role, associates with the organic matrix of bone and cartilage. Thought to act as an inhibitor of bone formation. This chain is Matrix Gla protein (MGP), found in Pongo abelii (Sumatran orangutan).